The primary structure comprises 210 residues: Orotate phosphoribosyltransferase (210 aa).

Residues arginine 96, lysine 100, histidine 102, and 122 to 130 each bind 5-phospho-alpha-D-ribose 1-diphosphate; that span reads EDLISTGGS. Serine 126 is an orotate binding site.

This sequence belongs to the purine/pyrimidine phosphoribosyltransferase family. PyrE subfamily. As to quaternary structure, homodimer. Mg(2+) is required as a cofactor.

The enzyme catalyses orotidine 5'-phosphate + diphosphate = orotate + 5-phospho-alpha-D-ribose 1-diphosphate. It functions in the pathway pyrimidine metabolism; UMP biosynthesis via de novo pathway; UMP from orotate: step 1/2. Catalyzes the transfer of a ribosyl phosphate group from 5-phosphoribose 1-diphosphate to orotate, leading to the formation of orotidine monophosphate (OMP). The sequence is that of Orotate phosphoribosyltransferase (pyrE) from Streptococcus pneumoniae serotype 19F (strain G54).